The chain runs to 304 residues: N-acetylmuramic acid 6-phosphate etherase (304 aa).

The 164-residue stretch at 62–225 (IVQAFQNGGR…TTASMVMIGK (164 aa)) folds into the SIS domain. Catalysis depends on Glu-90, which acts as the Proton donor. Glu-121 is an active-site residue.

Belongs to the GCKR-like family. MurNAc-6-P etherase subfamily. Homodimer.

The catalysed reaction is N-acetyl-D-muramate 6-phosphate + H2O = N-acetyl-D-glucosamine 6-phosphate + (R)-lactate. Its pathway is amino-sugar metabolism; 1,6-anhydro-N-acetylmuramate degradation. It functions in the pathway amino-sugar metabolism; N-acetylmuramate degradation. The protein operates within cell wall biogenesis; peptidoglycan recycling. Specifically catalyzes the cleavage of the D-lactyl ether substituent of MurNAc 6-phosphate, producing GlcNAc 6-phosphate and D-lactate. Together with AnmK, is also required for the utilization of anhydro-N-acetylmuramic acid (anhMurNAc) either imported from the medium or derived from its own cell wall murein, and thus plays a role in cell wall recycling. This is N-acetylmuramic acid 6-phosphate etherase from Actinobacillus pleuropneumoniae serotype 7 (strain AP76).